The primary structure comprises 628 residues: Chaperone protein DnaK (628 aa).

Threonine 197 is modified (phosphothreonine; by autocatalysis). The segment covering 595–604 (AEAMYKKEQG) has biased composition (basic and acidic residues). Residues 595–628 (AEAMYKKEQGEQAGAQPNQKAKKDDDDVIDAEVE) are disordered.

This sequence belongs to the heat shock protein 70 family.

In terms of biological role, acts as a chaperone. The polypeptide is Chaperone protein DnaK (Aliarcobacter butzleri (strain RM4018) (Arcobacter butzleri)).